A 392-amino-acid chain; its full sequence is 4-hydroxybenzoate polyprenyltransferase, mitochondrial (392 aa).

A mitochondrion-targeting transit peptide spans 1 to 22 (MYALRHLRLQSARHFRSSYAAA). The next 9 helical transmembrane spans lie at 90 to 110 (IGTY…ADAG), 115 to 135 (LTML…GCTI), 163 to 183 (FDAI…LVQL), 184 to 204 (NWQS…YPLM), 207 to 227 (VTYW…LLGW), 236 to 256 (LAAC…YDTI), 283 to 303 (VWLS…GWAC), 307 to 327 (VPYY…IYSL), and 339 to 359 (FISN…GTLL). Residues 365-392 (KKQRQSSLTTSTASSYVPALPQKPEVLS) form a disordered region. Polar residues predominate over residues 369–379 (QSSLTTSTASS).

This sequence belongs to the UbiA prenyltransferase family. The cofactor is Mg(2+).

Its subcellular location is the mitochondrion inner membrane. It carries out the reaction an all-trans-polyprenyl diphosphate + 4-hydroxybenzoate = a 4-hydroxy-3-(all-trans-polyprenyl)benzoate + diphosphate. Its pathway is cofactor biosynthesis; ubiquinone biosynthesis. In terms of biological role, catalyzes the prenylation of para-hydroxybenzoate (PHB) with an all-trans polyprenyl group. Mediates the second step in the final reaction sequence of coenzyme Q (CoQ) biosynthesis, which is the condensation of the polyisoprenoid side chain with PHB, generating the first membrane-bound Q intermediate. This Drosophila melanogaster (Fruit fly) protein is 4-hydroxybenzoate polyprenyltransferase, mitochondrial.